The chain runs to 2178 residues: DNA-directed RNA polymerase subunit beta (2178 aa).

3 insert regions span residues 269 to 325, 714 to 1508, and 1703 to 1900; these read SKKI…TPFV, KRID…LFYN, and KGND…LQPM.

The protein belongs to the RNA polymerase beta chain family. In plastids the minimal PEP RNA polymerase catalytic core is composed of four subunits: alpha, beta, beta', and beta''. When a (nuclear-encoded) sigma factor is associated with the core the holoenzyme is formed, which can initiate transcription.

It localises to the plastid. The protein resides in the chloroplast. The catalysed reaction is RNA(n) + a ribonucleoside 5'-triphosphate = RNA(n+1) + diphosphate. Its function is as follows. DNA-dependent RNA polymerase catalyzes the transcription of DNA into RNA using the four ribonucleoside triphosphates as substrates. The protein is DNA-directed RNA polymerase subunit beta of Tupiella akineta (Green alga).